The chain runs to 137 residues: Small ribosomal subunit protein uS12 (137 aa).

Residues 1 to 24 (MPTINQLVRKGRRSQSSKSKAPAL) form a disordered region. At D102 the chain carries 3-methylthioaspartic acid.

The protein belongs to the universal ribosomal protein uS12 family. Part of the 30S ribosomal subunit. Contacts proteins S8 and S17. May interact with IF1 in the 30S initiation complex.

Functionally, with S4 and S5 plays an important role in translational accuracy. In terms of biological role, interacts with and stabilizes bases of the 16S rRNA that are involved in tRNA selection in the A site and with the mRNA backbone. Located at the interface of the 30S and 50S subunits, it traverses the body of the 30S subunit contacting proteins on the other side and probably holding the rRNA structure together. The combined cluster of proteins S8, S12 and S17 appears to hold together the shoulder and platform of the 30S subunit. This chain is Small ribosomal subunit protein uS12, found in Pediococcus pentosaceus (strain ATCC 25745 / CCUG 21536 / LMG 10740 / 183-1w).